Consider the following 301-residue polypeptide: MSVREKMLEILEGIDIRFKEPLHSYSYTKVGGEADYLVFPRNRFELARLVKFANQENIPWMVLGNASNIIVRDGGIRGFVILCDKLNNVSVDGYTIEAEAGANLIETTRIALRHSLTGFEFACGIPGSVGGAVFMNAGAYGGEIAHILQSCKVLTKDGEIETLSAKDLAFGYRHSAIQESGAVVLSVKFALAPGTHQVIKQEMDRLTHLRELKQPLEYPSCGSVFKRPVGHFAGQLISEAGLKGYRIGGVEVSEKHAGFMINVADGTAKDYEDLIQSVIEKVKEHSGITLEREVRILGESK.

One can recognise an FAD-binding PCMH-type domain in the interval 30 to 194; the sequence is VGGEADYLVF…LSVKFALAPG (165 aa). Residue arginine 173 is part of the active site. The active-site Proton donor is the serine 223. Glutamate 293 is an active-site residue.

This sequence belongs to the MurB family. Requires FAD as cofactor.

It localises to the cytoplasm. The catalysed reaction is UDP-N-acetyl-alpha-D-muramate + NADP(+) = UDP-N-acetyl-3-O-(1-carboxyvinyl)-alpha-D-glucosamine + NADPH + H(+). Its pathway is cell wall biogenesis; peptidoglycan biosynthesis. In terms of biological role, cell wall formation. This is UDP-N-acetylenolpyruvoylglucosamine reductase from Streptococcus pneumoniae (strain JJA).